The sequence spans 78 residues: Pigment-dispersing hormone 1 peptides (78 aa).

Positions M1–G22 are cleaved as a signal peptide. A75 is modified (alanine amide).

Belongs to the arthropod PDH family. As to expression, eyestalk sinus gland.

The protein localises to the secreted. Functionally, the pigment-dispersing hormone causes the migration of the distal retinal pigment into the proximal end of the pigment chromatophore cells and thus decreases the amount of light entering the retinulas. May also function as a neurotransmitter and/or neuromodulator. The sequence is that of Pigment-dispersing hormone 1 peptides (PDH1) from Callinectes sapidus (Blue crab).